A 150-amino-acid chain; its full sequence is MQVILLENIQKLGNLGDIINVKAGYTRNFLIPKGKAKLATKTNLVEFELIRAKLQIAEAKTLKNAKAIETKMTNTICIIQANASEEGKLFGSINTTDIQTSLIKSGFKIEKRNIDIPETIRHTGEYKININLHTNITVSVKIVIEALQKV.

It belongs to the bacterial ribosomal protein bL9 family.

Its function is as follows. Binds to the 23S rRNA. This is Large ribosomal subunit protein bL9 from Vesicomyosocius okutanii subsp. Calyptogena okutanii (strain HA).